The following is a 235-amino-acid chain: Large ribosomal subunit protein bL25 (235 aa).

Disordered regions lie at residues 1–21 (MADNIINAQRREEKGKGPARR) and 210–235 (APAAGAAPAAGGEAAKKAPEAKGAKK). Positions 210 to 222 (APAAGAAPAAGGE) are enriched in low complexity. The span at 223-235 (AAKKAPEAKGAKK) shows a compositional bias: basic and acidic residues.

Belongs to the bacterial ribosomal protein bL25 family. CTC subfamily. As to quaternary structure, part of the 50S ribosomal subunit; part of the 5S rRNA/L5/L18/L25 subcomplex. Contacts the 5S rRNA. Binds to the 5S rRNA independently of L5 and L18.

Its function is as follows. This is one of the proteins that binds to the 5S RNA in the ribosome where it forms part of the central protuberance. The polypeptide is Large ribosomal subunit protein bL25 (Anaeromyxobacter sp. (strain Fw109-5)).